The chain runs to 258 residues: MLAKRIIPCLDVKDGQVVKGVQFRNHEIIGDIVPLAQRYAQEGADELVFYDITASSDGRVVDKSWVARVAEVIDIPFCVAGGIKSVEDASQILTFGADKISINSPALADPTLITRLADRYGVQCIVVGIDTWYDTESDSYQVYQFTGDEKRTKATTWQTEDWVKEVQLRGAGEIVLNMMNQDGVRNGYDLRQLQQMRAICHVPLIASGGAGTPDHFLEAFRDADVDGALAASVFHKKIINIGELKKYLSEQGVEIRVC.

Active-site residues include aspartate 11 and aspartate 130.

The protein belongs to the HisA/HisF family. As to quaternary structure, heterodimer of HisH and HisF.

The protein localises to the cytoplasm. The enzyme catalyses 5-[(5-phospho-1-deoxy-D-ribulos-1-ylimino)methylamino]-1-(5-phospho-beta-D-ribosyl)imidazole-4-carboxamide + L-glutamine = D-erythro-1-(imidazol-4-yl)glycerol 3-phosphate + 5-amino-1-(5-phospho-beta-D-ribosyl)imidazole-4-carboxamide + L-glutamate + H(+). It participates in amino-acid biosynthesis; L-histidine biosynthesis; L-histidine from 5-phospho-alpha-D-ribose 1-diphosphate: step 5/9. In terms of biological role, IGPS catalyzes the conversion of PRFAR and glutamine to IGP, AICAR and glutamate. The HisF subunit catalyzes the cyclization activity that produces IGP and AICAR from PRFAR using the ammonia provided by the HisH subunit. The chain is Imidazole glycerol phosphate synthase subunit HisF from Yersinia pestis (strain Pestoides F).